A 341-amino-acid chain; its full sequence is L-threonine 3-dehydrogenase (341 aa).

Residue Cys38 coordinates Zn(2+). Residues Thr40 and His43 each act as charge relay system in the active site. Zn(2+)-binding residues include His63, Glu64, Cys93, Cys96, Cys99, and Cys107. Residues Ile175, Asp195, Arg200, 262 to 264 (LGI), and 286 to 287 (IY) each bind NAD(+).

The protein belongs to the zinc-containing alcohol dehydrogenase family. As to quaternary structure, homotetramer. Zn(2+) serves as cofactor.

It localises to the cytoplasm. The enzyme catalyses L-threonine + NAD(+) = (2S)-2-amino-3-oxobutanoate + NADH + H(+). The protein operates within amino-acid degradation; L-threonine degradation via oxydo-reductase pathway; glycine from L-threonine: step 1/2. In terms of biological role, catalyzes the NAD(+)-dependent oxidation of L-threonine to 2-amino-3-ketobutyrate. The sequence is that of L-threonine 3-dehydrogenase from Salmonella arizonae (strain ATCC BAA-731 / CDC346-86 / RSK2980).